The sequence spans 1357 residues: Mediator of RNA polymerase II transcription subunit 13 (1357 aa).

Disordered regions lie at residues serine 356 to phenylalanine 391 and aspartate 420 to glutamate 487. Residues isoleucine 435 to serine 451 show a composition bias toward polar residues.

The protein belongs to the Mediator complex subunit 13 family. As to quaternary structure, component of the SRB8-11 complex, which itself associates with the Mediator complex.

It localises to the nucleus. Its function is as follows. Component of the SRB8-11 complex. The SRB8-11 complex is a regulatory module of the Mediator complex which is itself involved in regulation of basal and activated RNA polymerase II-dependent transcription. The SRB8-11 complex may be involved in the transcriptional repression of a subset of genes regulated by Mediator. It may inhibit the association of the Mediator complex with RNA polymerase II to form the holoenzyme complex. The sequence is that of Mediator of RNA polymerase II transcription subunit 13 (SSN2) from Eremothecium gossypii (strain ATCC 10895 / CBS 109.51 / FGSC 9923 / NRRL Y-1056) (Yeast).